Consider the following 193-residue polypeptide: Cytochrome c biogenesis ATP-binding export protein CcmA (193 aa).

The 183-residue stretch at 9–191 (LSASGLAILR…AAGFPVTAEV (183 aa)) folds into the ABC transporter domain. 41–48 (GANGAGKT) contacts ATP.

It belongs to the ABC transporter superfamily. CcmA exporter (TC 3.A.1.107) family. The complex is composed of two ATP-binding proteins (CcmA) and two transmembrane proteins (CcmB).

It localises to the cell inner membrane. The catalysed reaction is heme b(in) + ATP + H2O = heme b(out) + ADP + phosphate + H(+). Its function is as follows. Part of the ABC transporter complex CcmAB involved in the biogenesis of c-type cytochromes; once thought to export heme, this seems not to be the case, but its exact role is uncertain. Responsible for energy coupling to the transport system. This Hyphomonas neptunium (strain ATCC 15444) protein is Cytochrome c biogenesis ATP-binding export protein CcmA.